The following is a 233-amino-acid chain: Ribosome maturation factor RimM (233 aa).

A disordered region spans residues 1–51 (MKRKQDSKGAGSRGQGAGEKKQGAGGRGQGEKKQKKSPVPSPQSPVPDPDE). Positions 11–28 (GSRGQGAGEKKQGAGGRG) are enriched in gly residues. Residues 145–226 (GEDEYHVVDL…RIEITPPPGL (82 aa)) enclose the PRC barrel domain.

Belongs to the RimM family. Binds ribosomal protein uS19.

The protein resides in the cytoplasm. An accessory protein needed during the final step in the assembly of 30S ribosomal subunit, possibly for assembly of the head region. Essential for efficient processing of 16S rRNA. May be needed both before and after RbfA during the maturation of 16S rRNA. It has affinity for free ribosomal 30S subunits but not for 70S ribosomes. The chain is Ribosome maturation factor RimM from Trichormus variabilis (strain ATCC 29413 / PCC 7937) (Anabaena variabilis).